The sequence spans 232 residues: Ribosomal RNA small subunit methyltransferase G (232 aa).

A disordered region spans residues 1 to 24 (MVDTALHPIPGRRTPPHPRSTLPL). S-adenosyl-L-methionine-binding positions include Gly-91, Leu-96, 142 to 143 (AE), and Arg-160.

The protein belongs to the methyltransferase superfamily. RNA methyltransferase RsmG family.

The protein resides in the cytoplasm. Its function is as follows. Specifically methylates the N7 position of guanine in position 518 of 16S rRNA. This is Ribosomal RNA small subunit methyltransferase G from Corynebacterium efficiens (strain DSM 44549 / YS-314 / AJ 12310 / JCM 11189 / NBRC 100395).